The chain runs to 1247 residues: MADTTTVVVERREVAEGRESSKANHIGEERRGYDVSRKRCSISVHGGGTEGGGGNMRTNYRELSPASLRIHRKSSHDIRNTLLGPDGEVLHLHDPSGKGGDGMGKMPAVVKPIKLKSIVTKAESYDTMHGKASDVMSCSREVCMGSVMTPHVIGTETRKPEIVQQHAKDFLDQYYSSIRRLKSPAHDSRWQQVQKEVEATGSYHLTETELIYGAKLAWRNSSRCIGRIQWSKLQVFDCRYVTTTSGMFEAICNHIKYATNKGNLRSAITIFPQRTDGKHDYRIWNNQIISYAGYKNADGKIIGDPANVEFTDFCVKLGWKSKRTEWDILPLVVSANGHDPDYFDYPPELILEVPLSHPQFKWFAELNLRWYAVPMVSSMLFDCGGIQFTATAFSGWYMSTEIGCRNLCDANRRNLLEPIAIKMGLDTRNPTSLWKDKALVEINIAVLHSYQSRNITIVDHHTASESFMKHFENETKLRNGCPADWIWIVPPMSASVTPVFHQEMAVYYLRPSFEYQESAMKTHIWKKGRDSAKNKKPRRKFNFKQIARAVKFTSKLFGRALSRRIKATVLYATETGRSEQYARQLVELLGHAFNAQIYCMSDYDISSIEHEALLLVVASTFGNGDPPENGELFAQDLYAMKLHESGHHQAHSELTIAASSKSFIKANSRSDLGKFGPMGGRKIDRLDSLRGSTTDTLSEETFGPLSNVRFAVFALGSSAYPNFCAFGKYIDNILGELGGERLMKMATGDEICGQEQAFRKWAPEVFKIACETFCLDPEETLSDAAFALQSELSENTVRYAPVAEYESLDRALSKFHNKKSMECSVKRNPINLHCEMNGTERSTILVEIMAEGIDYEPGDHVGIFPANRKEIVDGIIERLTGVNDPDEMLQLQVLKEKQTQNGVYKSWEPHERLPVCTLRTLLTRFLDITTPPTRQLLTYLASCCGDKADEERLLMLANESSVYEDWRYWKLPHLLEVLEEFPSCRPPAAVFVAQLNALQPRFYSISSSPRKYSNEIHLTVAIVTYRAEDGEGAEHYGVCSNYLANLQSDDKIYLFVRSAPSFHMSKDRTKPVILIGPGTGIAPFRSFWQEWDHIKTEMVDCKIPKVWLFFGCRTKNVDLYRDEKEEMVQHGVLDRVFLALSREENIPKTYVQDLALKEAESISELIMQEKGHIYVCGDVTMAEHVYQTLRKILATREKRTETEMEKYMLTLRDENRYHEDIFGITLRTAEIHNKSRATARIRMASQP.

The segment at 13–33 (EVAEGRESSKANHIGEERRGY) is disordered. Residue S146 coordinates (6R)-L-erythro-5,6,7,8-tetrahydrobiopterin. C224 serves as a coordination point for heme b. Positions 287, 396, 397, 401, and 406 each coordinate L-arginine. The (6R)-L-erythro-5,6,7,8-tetrahydrobiopterin site is built by W487 and F500. Residue Y515 coordinates heme b. Positions 537–557 (PRRKFNFKQIARAVKFTSKLF) are calmodulin-binding. One can recognise a Flavodoxin-like domain in the interval 567 to 766 (ATVLYATETG…AFRKWAPEVF (200 aa)). 712-743 (VFALGSSAYPNFCAFGKYIDNILGELGGERLM) contributes to the FMN binding site. One can recognise an FAD-binding FR-type domain in the interval 795–1065 (NTVRYAPVAE…VRSAPSFHMS (271 aa)). Residues 855–866 (YEPGDHVGIFPA) and 998–1008 (LQPRFYSISSS) each bind FAD. NADP(+) contacts are provided by residues 1073-1091 (ILIG…WQEW) and 1170-1185 (KGHI…AEHV).

It belongs to the NOS family. Heme b serves as cofactor. Requires FAD as cofactor. FMN is required as a cofactor.

The catalysed reaction is 2 L-arginine + 3 NADPH + 4 O2 + H(+) = 2 L-citrulline + 2 nitric oxide + 3 NADP(+) + 4 H2O. Stimulated by calcium/calmodulin. Its function is as follows. Produces nitric oxide (NO) which is a messenger molecule with diverse functions throughout the body. Nitric oxide limits plasmodium development in the midgut. The chain is Nitric oxide synthase from Anopheles stephensi (Indo-Pakistan malaria mosquito).